A 122-amino-acid chain; its full sequence is Neutral phospholipase A2 agkistrodotoxin (122 aa).

7 disulfide bridges follow: Cys26/Cys115, Cys28/Cys44, Cys43/Cys95, Cys49/Cys122, Cys50/Cys88, Cys57/Cys81, and Cys75/Cys86. Ca(2+) is bound by residues Tyr27, Gly29, and Gly31. The active site involves His47. Asp48 lines the Ca(2+) pocket. The active site involves Asp89.

Ca(2+) is required as a cofactor. Expressed by the venom gland.

The protein localises to the secreted. The enzyme catalyses a 1,2-diacyl-sn-glycero-3-phosphocholine + H2O = a 1-acyl-sn-glycero-3-phosphocholine + a fatty acid + H(+). Functionally, snake venom phospholipase A2 (PLA2) that inhibits neuromuscular transmission by blocking acetylcholine release from the nerve termini. PLA2 catalyzes the calcium-dependent hydrolysis of the 2-acyl groups in 3-sn-phosphoglycerides. In Gloydius halys (Chinese water mocassin), this protein is Neutral phospholipase A2 agkistrodotoxin.